The sequence spans 336 residues: WAT1-related protein At2g37450 (336 aa).

Helical transmembrane passes span 7–27 (ALPFILMVLLQIGYAGMDILT), 45–65 (HGVATVVMAPFAFYFDNPVIA), 79–99 (TFAIALYNTLPAVTFILALIF), 115–135 (VVGTVTTVGGIMVMTLVKGPA), 160–180 (GAVLVTIGCFSYACFMILQAI), 189–209 (LSLATWICLIGTIEGVVVALV), 227–247 (LTITYSGIVCSALGYYIGGVV), 255–275 (FVTAFKPLCMIVVAIMSSIIF), and 279–299 (MYLGRALGATVICVGLYLVIW). EamA domains are found at residues 63-126 (VIAQ…GGIM) and 169-298 (FSYA…YLVI).

The protein belongs to the drug/metabolite transporter (DMT) superfamily. Plant drug/metabolite exporter (P-DME) (TC 2.A.7.4) family.

It localises to the membrane. This chain is WAT1-related protein At2g37450, found in Arabidopsis thaliana (Mouse-ear cress).